The primary structure comprises 248 residues: MADS-box transcription factor 8 (248 aa).

An MADS-box domain is found at 1–61; it reads MGRGRVELKR…GKLYEFCSGQ (61 aa). The K-box domain maps to 90–180; sequence VQSSRNEYLK…RRKLEESNQL (91 aa).

May interact with the K-box of MADS6 and MADS16. May interact with MADS13 and MADS18. Binds to FCA. As to expression, expressed in lodicules, stamens and carpels.

It is found in the nucleus. Functionally, probable transcription factor. May be involved in the control of flowering time. This is MADS-box transcription factor 8 (MADS8) from Oryza sativa subsp. japonica (Rice).